A 501-amino-acid chain; its full sequence is Ribose import ATP-binding protein RbsA (501 aa).

2 consecutive ABC transporter domains span residues 6–242 and 253–495; these read LQLS…VGRK and KHGE…VGKK. Residue 38–45 coordinates ATP; that stretch reads GENGAGKS.

It belongs to the ABC transporter superfamily. Ribose importer (TC 3.A.1.2.1) family. In terms of assembly, the complex is composed of an ATP-binding protein (RbsA), two transmembrane proteins (RbsC) and a solute-binding protein (RbsB).

It is found in the cell inner membrane. The catalysed reaction is D-ribose(out) + ATP + H2O = D-ribose(in) + ADP + phosphate + H(+). Functionally, part of the ABC transporter complex RbsABC involved in ribose import. Responsible for energy coupling to the transport system. This is Ribose import ATP-binding protein RbsA from Vibrio parahaemolyticus serotype O3:K6 (strain RIMD 2210633).